We begin with the raw amino-acid sequence, 156 residues long: ATP synthase subunit b (156 aa).

The chain crosses the membrane as a helical span at residues 7–27 (LIGQTVAFIIFVWFCMKFVWP).

Belongs to the ATPase B chain family. F-type ATPases have 2 components, F(1) - the catalytic core - and F(0) - the membrane proton channel. F(1) has five subunits: alpha(3), beta(3), gamma(1), delta(1), epsilon(1). F(0) has three main subunits: a(1), b(2) and c(10-14). The alpha and beta chains form an alternating ring which encloses part of the gamma chain. F(1) is attached to F(0) by a central stalk formed by the gamma and epsilon chains, while a peripheral stalk is formed by the delta and b chains.

It localises to the cell inner membrane. In terms of biological role, f(1)F(0) ATP synthase produces ATP from ADP in the presence of a proton or sodium gradient. F-type ATPases consist of two structural domains, F(1) containing the extramembraneous catalytic core and F(0) containing the membrane proton channel, linked together by a central stalk and a peripheral stalk. During catalysis, ATP synthesis in the catalytic domain of F(1) is coupled via a rotary mechanism of the central stalk subunits to proton translocation. Functionally, component of the F(0) channel, it forms part of the peripheral stalk, linking F(1) to F(0). The chain is ATP synthase subunit b from Shewanella oneidensis (strain ATCC 700550 / JCM 31522 / CIP 106686 / LMG 19005 / NCIMB 14063 / MR-1).